Consider the following 131-residue polypeptide: Cyclin-dependent kinase 4 inhibitor B (131 aa).

ANK repeat units lie at residues 6 to 35 (GGDA…DPNR), 39 to 67 (FGRR…DPNC), 72 to 101 (TLTR…RLDV), and 105 to 131 (WGRL…TAGD).

Belongs to the CDKN2 cyclin-dependent kinase inhibitor family. In terms of assembly, heterodimer of CDKN2B with CDK4 or CDK6.

In terms of biological role, interacts strongly with CDK4 and CDK6. Potent inhibitor. Potential effector of TGF-beta induced cell cycle arrest. This Bos taurus (Bovine) protein is Cyclin-dependent kinase 4 inhibitor B (CDKN2B).